The following is a 304-amino-acid chain: Fluoroacetate dehalogenase (304 aa).

The AB hydrolase-1 domain occupies 26-151 (PALLLLHGFP…FVARAYWHWY (126 aa)). The Nucleophile role is filled by Asp104. Arg105, Arg108, His149, Trp150, and Tyr212 together coordinate fluoroacetate. The active-site Proton acceptor is the His271.

This sequence belongs to the AB hydrolase superfamily. Epoxide hydrolase family. In terms of assembly, homodimer.

The catalysed reaction is a haloacetate + H2O = a halide anion + glycolate + H(+). It catalyses the reaction fluoroacetate + H2O = fluoride + glycolate + H(+). Its function is as follows. Catalyzes the hydrolytic defluorination of fluoroacetate to produce glycolate. Has only very low activity towards chloroacetate and bromoacetate. This is Fluoroacetate dehalogenase (fac-dex) from Burkholderia sp.